Reading from the N-terminus, the 87-residue chain is Toxin ICK-41 (87 aa).

The N-terminal stretch at 1–19 is a signal peptide; sequence MKPIVYMLLFCAFTVVILG. Intrachain disulfides connect Cys-40-Cys-54, Cys-40-Cys-77, Cys-53-Cys-66, and Cys-80-Cys-87.

Belongs to the neurotoxin 27 (Jztx-72) family. ICK-41 subfamily. Expressed by the venom gland.

It is found in the secreted. Probable neurotoxin with ion channel impairing activity. The protein is Toxin ICK-41 of Trittame loki (Brush-footed trapdoor spider).